A 155-amino-acid chain; its full sequence is Transcriptional repressor NrdR (155 aa).

A zinc finger lies at Cys-3–Cys-34. Residues Leu-49–Asp-139 enclose the ATP-cone domain.

It belongs to the NrdR family. Zn(2+) is required as a cofactor.

In terms of biological role, negatively regulates transcription of bacterial ribonucleotide reductase nrd genes and operons by binding to NrdR-boxes. The sequence is that of Transcriptional repressor NrdR from Cereibacter sphaeroides (strain ATCC 17025 / ATH 2.4.3) (Rhodobacter sphaeroides).